Reading from the N-terminus, the 196-residue chain is 3-isopropylmalate dehydratase small subunit (196 aa).

The protein belongs to the LeuD family. LeuD type 1 subfamily. In terms of assembly, heterodimer of LeuC and LeuD.

The catalysed reaction is (2R,3S)-3-isopropylmalate = (2S)-2-isopropylmalate. It functions in the pathway amino-acid biosynthesis; L-leucine biosynthesis; L-leucine from 3-methyl-2-oxobutanoate: step 2/4. Catalyzes the isomerization between 2-isopropylmalate and 3-isopropylmalate, via the formation of 2-isopropylmaleate. This chain is 3-isopropylmalate dehydratase small subunit, found in Corynebacterium aurimucosum (strain ATCC 700975 / DSM 44827 / CIP 107346 / CN-1) (Corynebacterium nigricans).